The primary structure comprises 130 residues: Small ribosomal subunit protein uS11c (130 aa).

The protein belongs to the universal ribosomal protein uS11 family. In terms of assembly, part of the 30S ribosomal subunit.

It localises to the plastid. It is found in the chloroplast. This is Small ribosomal subunit protein uS11c from Marsilea quadrifolia (European water clover).